A 536-amino-acid chain; its full sequence is ATP synthase subunit alpha, mitochondrial (536 aa).

Residues 1–27 constitute a mitochondrion transit peptide; sequence MLRQAGTRLLKVPVCGLRPSITLKRGY. 197 to 204 is an ATP binding site; that stretch reads GDRQTGKT.

It belongs to the ATPase alpha/beta chains family. F-type ATPases have 2 components, CF(1) - the catalytic core - and CF(0) - the membrane proton channel. CF(1) has five subunits: alpha(3), beta(3), gamma(1), delta(1), epsilon(1). CF(0) has three main subunits: a, b and c.

The protein localises to the mitochondrion. It is found in the mitochondrion inner membrane. Functionally, mitochondrial membrane ATP synthase (F(1)F(0) ATP synthase or Complex V) produces ATP from ADP in the presence of a proton gradient across the membrane which is generated by electron transport complexes of the respiratory chain. F-type ATPases consist of two structural domains, F(1) - containing the extramembraneous catalytic core, and F(0) - containing the membrane proton channel, linked together by a central stalk and a peripheral stalk. During catalysis, ATP synthesis in the catalytic domain of F(1) is coupled via a rotary mechanism of the central stalk subunits to proton translocation. Subunits alpha and beta form the catalytic core in F(1). Rotation of the central stalk against the surrounding alpha(3)beta(3) subunits leads to hydrolysis of ATP in three separate catalytic sites on the beta subunits. Subunit alpha does not bear the catalytic high-affinity ATP-binding sites. In Schizosaccharomyces pombe (strain 972 / ATCC 24843) (Fission yeast), this protein is ATP synthase subunit alpha, mitochondrial (atp1).